Reading from the N-terminus, the 521-residue chain is Tetratricopeptide repeat and J domain-containing co-chaperone DNJ1 (521 aa).

The first 21 residues, 1 to 21 (MHLNLAGLAVAATAFLATASA), serve as a signal peptide directing secretion. 7 TPR repeats span residues 33 to 66 (VSNLLTKAQTHLSRGETNEALVYYDAAIARDPTN), 67 to 100 (YLSLFKRATAYLSLGRTSQATEDFNKVLSLKPGF), 102 to 134 (GAHLQLARLRAKAGDWDAAKAQYGLAGKAPKSA), 176 to 209 (PHLRELRAHCRFELGDVELALSDLQHVLHMKPGD), 211 to 244 (SPHIVISATSFYALGDLENGIGQVKKCLQSDPDS), 315 to 348 (LENLIEMTCQAYTESSHKEAAKYCDESLQLNPDS), and 349 to 382 (FWGLLHKGKAQLKSELYDAAIATLEKAAEIRPDQ). In terms of domain architecture, J spans 404–473 (DYYKVLGVEN…ELRARFDRGD (70 aa)). Residues 464 to 474 (ELRARFDRGDD) are compositionally biased toward basic and acidic residues. Residues 464–521 (ELRARFDRGDDPNSQERPNPFQGQGNPFGGGHPFMFQQGGGGGGPNIKFQFGGQPFGF) form a disordered region. Residues 489 to 508 (NPFGGGHPFMFQQGGGGGGP) show a composition bias toward gly residues. A compositionally biased stretch (low complexity) spans 509–521 (NIKFQFGGQPFGF).

It is found in the endoplasmic reticulum lumen. In terms of biological role, endoplasmic reticulum co-chaperone required for the of virulence factors such as PG1, the major endopolygalacturonase produced during the infection of tomato plants. The protein is Tetratricopeptide repeat and J domain-containing co-chaperone DNJ1 of Fusarium oxysporum f. sp. lycopersici (strain 4287 / CBS 123668 / FGSC 9935 / NRRL 34936) (Fusarium vascular wilt of tomato).